The primary structure comprises 470 residues: Methylenetetrahydrofolate--tRNA-(uracil-5-)-methyltransferase TrmFO (470 aa).

10-15 (GAGLAG) lines the FAD pocket.

It belongs to the MnmG family. TrmFO subfamily. Requires FAD as cofactor.

Its subcellular location is the cytoplasm. The catalysed reaction is uridine(54) in tRNA + (6R)-5,10-methylene-5,6,7,8-tetrahydrofolate + NADH + H(+) = 5-methyluridine(54) in tRNA + (6S)-5,6,7,8-tetrahydrofolate + NAD(+). The enzyme catalyses uridine(54) in tRNA + (6R)-5,10-methylene-5,6,7,8-tetrahydrofolate + NADPH + H(+) = 5-methyluridine(54) in tRNA + (6S)-5,6,7,8-tetrahydrofolate + NADP(+). Its function is as follows. Catalyzes the folate-dependent formation of 5-methyl-uridine at position 54 (M-5-U54) in all tRNAs. The chain is Methylenetetrahydrofolate--tRNA-(uracil-5-)-methyltransferase TrmFO from Prochlorococcus marinus (strain MIT 9312).